Here is a 406-residue protein sequence, read N- to C-terminus: Acetate kinase (406 aa).

Residue N7 participates in Mg(2+) binding. Position 14 (K14) interacts with ATP. Position 90 (R90) interacts with substrate. D147 acts as the Proton donor/acceptor in catalysis. Residues 207–211 (HLGNG), 283–285 (DMR), and 331–335 (GVGEN) contribute to the ATP site. E385 contacts Mg(2+).

The protein belongs to the acetokinase family. As to quaternary structure, homodimer. Mg(2+) serves as cofactor. Requires Mn(2+) as cofactor.

The protein localises to the cytoplasm. It catalyses the reaction acetate + ATP = acetyl phosphate + ADP. The protein operates within metabolic intermediate biosynthesis; acetyl-CoA biosynthesis; acetyl-CoA from acetate: step 1/2. Catalyzes the formation of acetyl phosphate from acetate and ATP. Can also catalyze the reverse reaction. In Thermosipho africanus (strain TCF52B), this protein is Acetate kinase.